The chain runs to 350 residues: Biotin synthase (350 aa).

A Radical SAM core domain is found at 54–278; it reads REIQLSTLLS…TMPQSYVRLS (225 aa). 3 residues coordinate [4Fe-4S] cluster: Cys69, Cys73, and Cys76. [2Fe-2S] cluster is bound by residues Cys113, Cys144, Cys204, and Arg276.

This sequence belongs to the radical SAM superfamily. Biotin synthase family. In terms of assembly, homodimer. Requires [4Fe-4S] cluster as cofactor. [2Fe-2S] cluster is required as a cofactor.

The catalysed reaction is (4R,5S)-dethiobiotin + (sulfur carrier)-SH + 2 reduced [2Fe-2S]-[ferredoxin] + 2 S-adenosyl-L-methionine = (sulfur carrier)-H + biotin + 2 5'-deoxyadenosine + 2 L-methionine + 2 oxidized [2Fe-2S]-[ferredoxin]. It participates in cofactor biosynthesis; biotin biosynthesis; biotin from 7,8-diaminononanoate: step 2/2. In terms of biological role, catalyzes the conversion of dethiobiotin (DTB) to biotin by the insertion of a sulfur atom into dethiobiotin via a radical-based mechanism. The chain is Biotin synthase from Neisseria meningitidis serogroup A / serotype 4A (strain DSM 15465 / Z2491).